The chain runs to 684 residues: Methionine--tRNA ligase (684 aa).

The 'HIGH' region motif lies at 12 to 22; sequence PYANGSIHLGH. Residues cysteine 143, cysteine 146, cysteine 156, and cysteine 159 each coordinate Zn(2+). The short motif at 339 to 343 is the 'KMSKS' region element; the sequence is KMSKS. Lysine 342 provides a ligand contact to ATP. The region spanning 581-684 is the tRNA-binding domain; the sequence is DFMKIDMRVA…AGAQPGDKVG (104 aa).

It belongs to the class-I aminoacyl-tRNA synthetase family. MetG type 1 subfamily. Homodimer. The cofactor is Zn(2+).

The protein resides in the cytoplasm. The catalysed reaction is tRNA(Met) + L-methionine + ATP = L-methionyl-tRNA(Met) + AMP + diphosphate. Its function is as follows. Is required not only for elongation of protein synthesis but also for the initiation of all mRNA translation through initiator tRNA(fMet) aminoacylation. This Neisseria gonorrhoeae (strain ATCC 700825 / FA 1090) protein is Methionine--tRNA ligase.